The following is a 336-amino-acid chain: D-alanine--D-alanine ligase (336 aa).

Residues 124-330 (KMWFSALGIP…FTEYLSLVIN (207 aa)) form the ATP-grasp domain. 154–209 (ALENWGSIFVKAASQGSSVGCYKVDDSSKVAGVLKDAFGYAPYVIVEKTIKARELE) contacts ATP. The Mg(2+) site is built by Asp284, Glu297, and Asn299.

The protein belongs to the D-alanine--D-alanine ligase family. Requires Mg(2+) as cofactor. Mn(2+) is required as a cofactor.

The protein localises to the cytoplasm. The catalysed reaction is 2 D-alanine + ATP = D-alanyl-D-alanine + ADP + phosphate + H(+). The protein operates within cell wall biogenesis; peptidoglycan biosynthesis. Its function is as follows. Cell wall formation. The polypeptide is D-alanine--D-alanine ligase (Shewanella sp. (strain MR-4)).